The following is a 322-amino-acid chain: D-specific alpha-keto acid dehydrogenase (322 aa).

Residues Q156–I157, T229–R231, and D255 each bind NAD(+). The active site involves R231. The active site involves E260. H292 (proton donor) is an active-site residue. H292–Y295 is an NAD(+) binding site.

The protein belongs to the D-isomer specific 2-hydroxyacid dehydrogenase family.

It carries out the reaction a (2R)-2-hydroxycarboxylate + NADP(+) = a 2-oxocarboxylate + NADPH + H(+). The catalysed reaction is a (2R)-2-hydroxycarboxylate + NAD(+) = a 2-oxocarboxylate + NADH + H(+). The enzyme catalyses (R)-lactate + NADP(+) = pyruvate + NADPH + H(+). It catalyses the reaction (R)-lactate + NAD(+) = pyruvate + NADH + H(+). It carries out the reaction (2R)-hydroxybutanoate + NADP(+) = 2-oxobutanoate + NADPH + H(+). In terms of biological role, required for high-level resistance to glycopeptide antibiotics. Catalyzes the reduction of 2-keto acids to 2-D-hydroxy acids, exhibiting highest catalytic efficiency with pyruvate and 2-oxobutanoate/alpha-ketobutyrate as substrates, producing D-lactate and (2R)-hydroxybutanoate, respectively. Together with D-alanine--D-lactate ligase VanA, gives rise to peptidoglycan precursors that terminate in the depsipeptide D-alanine-D-lactate rather than the dipeptide D-alanine-D-alanine thus preventing vancomycin binding. Shows a slight preference for NADPH over NADH as the electron donor. The protein is D-specific alpha-keto acid dehydrogenase of Enterococcus faecium (Streptococcus faecium).